The following is a 342-amino-acid chain: Cytochrome f (342 aa).

The N-terminal stretch at 1–28 (MKKQWIAGAFGLTAALAGLVSVPQSALA) is a signal peptide. C48, C51, and H52 together coordinate heme. The chain crosses the membrane as a helical span at residues 305–325 (VTWLVAFLAAAFICQLLLVLK).

The protein belongs to the cytochrome f family. In terms of assembly, the 4 large subunits of the cytochrome b6-f complex are cytochrome b6, subunit IV (17 kDa polypeptide, PetD), cytochrome f and the Rieske protein, while the 4 small subunits are PetG, PetL, PetM and PetN. The complex functions as a dimer. Heme serves as cofactor.

It is found in the cell inner membrane. Functionally, component of the cytochrome b6-f complex, which mediates electron transfer between photosystem II (PSII) and photosystem I (PSI), cyclic electron flow around PSI, and state transitions. This is Cytochrome f (petA) from Gloeobacter violaceus (strain ATCC 29082 / PCC 7421).